The chain runs to 91 residues: MARMIQCAKLGKEAEGLDFPPLPGELGKRIYESVSKEAWQGWLKQQTMLINENRLNMADPRARQYLMKQTEKYFFGDGADQASGFVPPTEG.

This sequence belongs to the Fe(2+)-trafficking protein family.

In terms of biological role, could be a mediator in iron transactions between iron acquisition and iron-requiring processes, such as synthesis and/or repair of Fe-S clusters in biosynthetic enzymes. The sequence is that of Probable Fe(2+)-trafficking protein from Burkholderia ambifaria (strain MC40-6).